Consider the following 771-residue polypeptide: Tetratricopeptide repeat-containing protein trd-1 (771 aa).

6 TPR repeats span residues leucine 389–leucine 415, isoleucine 416–arginine 449, alanine 451–glutamine 484, leucine 485–histidine 518, glutamate 520–histidine 552, and proline 553–glycine 586.

This sequence belongs to the TTC27 family. In terms of tissue distribution, expressed in the spermatheca.

It localises to the cytoplasm. Developmental protein required for cell fate determination in both the germline and seam cells of the developing epidermis. Specifically, involved in sex determination and may function in parallel or downstream of other sex determination factors, including tra-2 and fem-3, to promote oogenesis in its role in the regulation of the switch from spermatogenesis to oogenesis in the gonads. Also implicated in the mitosis to meiosis switch in distal tip cells. This is Tetratricopeptide repeat-containing protein trd-1 from Caenorhabditis elegans.